A 517-amino-acid chain; its full sequence is Cytochrome P450 monooxygenase stcB (517 aa).

Cys-461 lines the heme pocket.

It belongs to the cytochrome P450 family. It depends on heme as a cofactor.

It functions in the pathway mycotoxin biosynthesis; sterigmatocystin biosynthesis. Cytochrome P450 monooxygenase; part of the gene cluster that mediates the biosynthesis of sterigmatocystin (ST), a polyketide-derived furanocoumarin which is part of the most toxic and carcinogenic compounds among the known mycotoxins. The first step in the biosynthesis of sterigmatocystin is the production of hexanoate by the fatty acid synthase (FAS) units stcJ and stcK. The polyketide backbone is assembled by the non-reducing polyketide synthase stcA by condensation of the starter hexanoyl-CoA and 7 malonyl-CoA extender units followed by cyclization and release of norsolorinic acid. Norsolorinic acid is the first stable intermediate in the biosynthesis of sterigmatocystin and is converted into averantin (AVN) by the ketoreductase stcE which reduces the hexanoate ketone to an alcohol. Averantin is then oxidized into 5'-hydroxyaverantin (HAVN) by the cytochrome P450 monooxygenase stcF. 5'-hydroxyaverantin is further converted to 5'-oxyaverantin (OAVN) by the 5'-hydroxyaverantin dehydrogenase stcG. The next step is the conversion of OAVN into averufin (AVF) which is catalyzed by a yet to be identified enzyme. The cytochrome P450 monooxygenase stcB and the flavin-binding monooxygenase stcW are both required for the conversion of averufin to 1-hydroxyversicolorone. The esterase stcI probably catalyzes the formation of versiconal hemiacetal acetate from 1-hydroxyversicolorone. The oxydoreductase stcN then probably catalyzes the biosynthetic step from versiconal to versicolorin B (VERB). The next step is performed by the versicolorin B desaturase stcL to produce versicolorin A (VERA). The ketoreductase stcU and the cytochrome P450 monooxygenase stcS are involved in the conversion of versicolorin A to demethylsterigmatocystin. The Baeyer-Villiger oxidas stcQ and the reductase stcR might be involved in the biosynthetic step from versicolorin A to demethylsterigmatocystin. The final step in the biosynthesis of sterigmatocystin is the methylation of demethylsterigmatocystin catalyzed by the methyltransferase stcP. The sequence is that of Cytochrome P450 monooxygenase stcB from Emericella nidulans (strain FGSC A4 / ATCC 38163 / CBS 112.46 / NRRL 194 / M139) (Aspergillus nidulans).